Reading from the N-terminus, the 611-residue chain is Creatine transporter (611 aa).

Residues phenylalanine 45–leucine 65 form a helical membrane-spanning segment. The Extracellular portion of the chain corresponds to cysteine 66 to glycine 71. The helical transmembrane segment at glycine 72 to leucine 92 threads the bilayer. At glutamate 93–methionine 122 the chain is on the cytoplasmic side. The helical transmembrane segment at valine 123–leucine 143 threads the bilayer. The Extracellular segment spans residues valine 144 to glutamate 207. 2 N-linked (GlcNAc...) asparagine glycosylation sites follow: asparagine 157 and asparagine 171. The helical transmembrane segment at isoleucine 208–tryptophan 228 threads the bilayer. The Cytoplasmic segment spans residues lysine 229 to tyrosine 246. A helical transmembrane segment spans residues isoleucine 247–valine 267. Topologically, residues tyrosine 268–glutamine 281 are extracellular. Residues valine 282–threonine 302 traverse the membrane as a helical segment. At alanine 303 to alanine 318 the chain is on the cytoplasmic side. A helical membrane pass occupies residues phenylalanine 319–isoleucine 339. Over leucine 340 to threonine 371 the chain is Extracellular. The chain crosses the membrane as a helical span at residues leucine 372 to leucine 392. Residues glycine 393–glutamate 421 are Cytoplasmic-facing. A helical membrane pass occupies residues valine 422–glycine 442. The Extracellular segment spans residues glycine 443–serine 456. The chain crosses the membrane as a helical span at residues glycine 457–glycine 477. Residues aspartate 478–lysine 497 lie on the Cytoplasmic side of the membrane. A helical transmembrane segment spans residues tryptophan 498–asparagine 518. Residues tyrosine 519 to isoleucine 537 are Extracellular-facing. Asparagine 525 is a glycosylation site (N-linked (GlcNAc...) asparagine). The chain crosses the membrane as a helical span at residues glycine 538–serine 558. The Cytoplasmic portion of the chain corresponds to arginine 559–leucine 611.

This sequence belongs to the sodium:neurotransmitter symporter (SNF) (TC 2.A.22) family.

The protein resides in the membrane. Its function is as follows. Required for the uptake of creatine. The sequence is that of Creatine transporter from Torpedo marmorata (Marbled electric ray).